Reading from the N-terminus, the 404-residue chain is Diphosphomevalonate decarboxylase mvd1 (404 aa).

(R)-5-diphosphomevalonate contacts are provided by residues 25-28, Arg-82, 161-166, and Thr-217; these read YWGK and SGSACR.

The protein belongs to the diphosphomevalonate decarboxylase family. In terms of assembly, homodimer.

The catalysed reaction is (R)-5-diphosphomevalonate + ATP = isopentenyl diphosphate + ADP + phosphate + CO2. It participates in isoprenoid biosynthesis; isopentenyl diphosphate biosynthesis via mevalonate pathway; isopentenyl diphosphate from (R)-mevalonate: step 3/3. In terms of biological role, diphosphomevalonate decarboxylase; part of the second module of ergosterol biosynthesis pathway that includes the middle steps of the pathway. Mvd1 converts diphosphomevalonate into isopentenyl diphosphate. The second module is carried out in the vacuole and involves the formation of farnesyl diphosphate, which is also an important intermediate in the biosynthesis of ubiquinone, dolichol, heme and prenylated proteins. Activity by the mevalonate kinase erg12 (AFUA_4G07780) first converts mevalonate into 5-phosphomevalonate. 5-phosphomevalonate is then further converted to 5-diphosphomevalonate by the phosphomevalonate kinase erg8 (AFUA_5G10680). The diphosphomevalonate decarboxylase mvd1 (AFUA_4G07130) then produces isopentenyl diphosphate. The isopentenyl-diphosphate delta-isomerase idi1 (AFUA_6G11160) then catalyzes the 1,3-allylic rearrangement of the homoallylic substrate isopentenyl (IPP) to its highly electrophilic allylic isomer, dimethylallyl diphosphate (DMAPP). Finally the farnesyl diphosphate synthase erg20 (AFUA_5G02450) catalyzes the sequential condensation of isopentenyl pyrophosphate with dimethylallyl pyrophosphate, and then with the resultant geranylpyrophosphate to the ultimate product farnesyl pyrophosphate. This chain is Diphosphomevalonate decarboxylase mvd1, found in Aspergillus fumigatus (strain ATCC MYA-4609 / CBS 101355 / FGSC A1100 / Af293) (Neosartorya fumigata).